Consider the following 653-residue polypeptide: DNA mismatch repair protein MutL (653 aa).

The disordered stretch occupies residues 368–413 (EVSQVAEPEGKTDITNKKETETKEKAEKKENKQEEKEEKTSAPEYV). A compositionally biased stretch (basic and acidic residues) spans 375–408 (PEGKTDITNKKETETKEKAEKKENKQEEKEEKTS).

It belongs to the DNA mismatch repair MutL/HexB family.

This protein is involved in the repair of mismatches in DNA. It is required for dam-dependent methyl-directed DNA mismatch repair. May act as a 'molecular matchmaker', a protein that promotes the formation of a stable complex between two or more DNA-binding proteins in an ATP-dependent manner without itself being part of a final effector complex. The chain is DNA mismatch repair protein MutL from Lactobacillus delbrueckii subsp. bulgaricus (strain ATCC 11842 / DSM 20081 / BCRC 10696 / JCM 1002 / NBRC 13953 / NCIMB 11778 / NCTC 12712 / WDCM 00102 / Lb 14).